Reading from the N-terminus, the 211-residue chain is Probable GTP-binding protein EngB (211 aa).

Residues 30-204 (EGFEVAFAGR…YTVLADWMEL (175 aa)) enclose the EngB-type G domain. GTP-binding positions include 38-45 (GRSNAGKS), 64-68 (GRTQL), 82-85 (DLPG), 149-152 (TKAD), and 182-185 (LFSA). Mg(2+) is bound by residues serine 45 and threonine 66.

It belongs to the TRAFAC class TrmE-Era-EngA-EngB-Septin-like GTPase superfamily. EngB GTPase family. Requires Mg(2+) as cofactor.

In terms of biological role, necessary for normal cell division and for the maintenance of normal septation. The sequence is that of Probable GTP-binding protein EngB from Pseudomonas savastanoi pv. phaseolicola (strain 1448A / Race 6) (Pseudomonas syringae pv. phaseolicola (strain 1448A / Race 6)).